A 355-amino-acid polypeptide reads, in one-letter code: Iron deficiency-induced protein A (355 aa).

The segment at residues 1 to 34 (MEKVGRRVFLGMGAAATAYVTHHLWNQNAESSYA) is a signal peptide (tat-type signal). The Fe cation site is built by His-49, Tyr-50, Tyr-180, Tyr-236, and Tyr-237.

The protein belongs to the bacterial solute-binding protein 1 family. Predicted to be exported by the Tat system. The position of the signal peptide cleavage has not been experimentally proven.

It is found in the cellular thylakoid membrane. In terms of biological role, plays an important role in protecting the acceptor side of photosystem II (PSII) against oxidative damage, especially under iron-limiting growth conditions. Its function is as follows. May also be part of a periplasmic ABC transporter complex involved in iron import. The sequence is that of Iron deficiency-induced protein A (idiA) from Thermosynechococcus vestitus (strain NIES-2133 / IAM M-273 / BP-1).